We begin with the raw amino-acid sequence, 349 residues long: Sensory histidine kinase/phosphatase NtrB (349 aa).

One can recognise a PAS domain in the interval 5 to 78 (TQPDAGQILN…SLEAGQGFTD (74 aa)). The region spanning 136–349 (GLAHEIKNPL…EFSVYLPIRK (214 aa)) is the Histidine kinase domain. H139 bears the Phosphohistidine; by autocatalysis mark. K329 contributes to the ATP binding site.

Post-translationally, autophosphorylated.

The protein resides in the cytoplasm. It catalyses the reaction ATP + protein L-histidine = ADP + protein N-phospho-L-histidine.. Member of the two-component regulatory system NtrB/NtrC, which controls expression of the nitrogen-regulated (ntr) genes in response to nitrogen limitation. Under conditions of nitrogen limitation, NtrB autophosphorylates and transfers the phosphoryl group to NtrC. In the presence of nitrogen, acts as a phosphatase that dephosphorylates and inactivates NtrC. In Escherichia coli O157:H7, this protein is Sensory histidine kinase/phosphatase NtrB (glnL).